A 497-amino-acid chain; its full sequence is Pseudooxynicotine dehydrogenase (497 aa).

Positions 1-43 (MANDKGDISKDGVSRRKFLGGAVIGAAAAAGVGSQILSLSATA) form a signal peptide, tat-type signal. 7 residues coordinate FAD: A70, E89, R97, W114, V286, S462, and I472.

Belongs to the flavin monoamine oxidase family. As to quaternary structure, homodimer. The cofactor is FAD. Predicted to be exported by the Tat system. The position of the signal peptide cleavage has not been experimentally proven.

It is found in the periplasm. The enzyme catalyses pseudooxynicotine + 2 Fe(III)-[cytochrome c] + H2O = 4-oxo-4-(pyridin-3-yl)butanal + methylamine + 2 Fe(II)-[cytochrome c] + 2 H(+). It participates in alkaloid degradation; nicotine degradation. Its activity is regulated as follows. Strongly inhibited by Ag(+), Co(2+), Cu(2+) and Hg(2+). Involved in nicotine degradation. Catalyzes the deamination of pseudooxynicotine to 3-succinoylsemialdehyde-pyridine. The chain is Pseudooxynicotine dehydrogenase from Pseudomonas sp.